The chain runs to 118 residues: Large ribosomal subunit protein bL20 (118 aa).

It belongs to the bacterial ribosomal protein bL20 family.

Binds directly to 23S ribosomal RNA and is necessary for the in vitro assembly process of the 50S ribosomal subunit. It is not involved in the protein synthesizing functions of that subunit. The sequence is that of Large ribosomal subunit protein bL20 from Campylobacter concisus (strain 13826).